Here is a 202-residue protein sequence, read N- to C-terminus: Holliday junction resolvase RecU (202 aa).

Residues T85, D87, E100, and Q119 each coordinate Mg(2+).

This sequence belongs to the RecU family. Requires Mg(2+) as cofactor.

It is found in the cytoplasm. The catalysed reaction is Endonucleolytic cleavage at a junction such as a reciprocal single-stranded crossover between two homologous DNA duplexes (Holliday junction).. Its function is as follows. Endonuclease that resolves Holliday junction intermediates in genetic recombination. Cleaves mobile four-strand junctions by introducing symmetrical nicks in paired strands. Promotes annealing of linear ssDNA with homologous dsDNA. Required for DNA repair, homologous recombination and chromosome segregation. The chain is Holliday junction resolvase RecU from Streptococcus pyogenes serotype M6 (strain ATCC BAA-946 / MGAS10394).